Reading from the N-terminus, the 1123-residue chain is Probable serine/threonine-protein kinase nek3 (1123 aa).

The Protein kinase domain maps to 4–264 (YEEIKTIGKG…VNDILELPFI (261 aa)). ATP is bound by residues 10–18 (IGKGSFGRA) and K33. Catalysis depends on D130, which acts as the Proton acceptor. Composition is skewed to low complexity over residues 283-307 (NNDSLNISNNSSGSNNSASNNISSS) and 327-415 (NNNN…TSLK). Disordered regions lie at residues 283 to 310 (NNDSLNISNNSSGSNNSASNNISSSTEV), 325 to 415 (NINN…TSLK), 440 to 802 (SKTP…TNSQ), 866 to 887 (SASTASTASTTNTTLTSGTNTM), 908 to 937 (SVKLSSKSSSPIKTSSSSSSSSSSSSSITD), and 990 to 1020 (SLNNSLTSSSSSIITNQNNQNNQNNQNNQNN). Residues 440-459 (SKTPISGTKNPTTSKITPSI) are compositionally biased toward polar residues. Low complexity-rich tracts occupy residues 478 to 529 (SKPT…SSSV), 557 to 576 (SNLSSQISSSSSSSSSSNSQ), 588 to 617 (SPTSTSTKSPTNPSPTLSSSSSLPKSSLKS), and 642 to 653 (NGNSNVNSTVLN). Residues 654 to 665 (RSVSSLSIQHKP) show a composition bias toward polar residues. Low complexity-rich tracts occupy residues 666–696 (TNSGSSSISSSSSGNNSNSNTTTNNNTTSTT), 712–738 (STPTSISTSNKSTTTTPTSSRSNTPST), and 752–802 (SSNG…TNSQ). Low complexity predominate over residues 908 to 935 (SVKLSSKSSSPIKTSSSSSSSSSSSSSI).

The protein belongs to the protein kinase superfamily. NEK Ser/Thr protein kinase family. NIMA subfamily.

It catalyses the reaction L-seryl-[protein] + ATP = O-phospho-L-seryl-[protein] + ADP + H(+). It carries out the reaction L-threonyl-[protein] + ATP = O-phospho-L-threonyl-[protein] + ADP + H(+). The chain is Probable serine/threonine-protein kinase nek3 (nek3) from Dictyostelium discoideum (Social amoeba).